Reading from the N-terminus, the 336-residue chain is MAENQEVYDVTIIGGGPIGLFTAFYCGMRELKTKVIEFLPKLGGKVSLFFPEKIIRDIGGIPGIAGKQLIEQLKEQAATFDPDIVLNQRVTGFERLDDGTIVLTGSEGKKHYTRTVILACGMGTLEVNEFDSEDAARYAGKNLHYGVEKLDAFKGKRVVISGGGDTAVDWANELEPIAASVTVVHRREEFGGMESSVTKMKQSSVRVLTPYRLEQLNGDEEGIKSVTVCHTESGQRKDIEIDELIINHGFKIDLGPMMEWGLEIEEGRVKADRHMRTNLPGVFVAGDAAFYESKLRLIAGGFTEGPTAVNSAKAYLDPKAENMAMYSTHHKKLVHK.

7 residues coordinate FAD: Glu-37, Lys-45, Phe-50, Val-90, Leu-125, Asp-287, and Thr-328.

Belongs to the ferredoxin--NADP reductase type 2 family. In terms of assembly, homodimer. FAD is required as a cofactor.

The catalysed reaction is 2 reduced [2Fe-2S]-[ferredoxin] + NADP(+) + H(+) = 2 oxidized [2Fe-2S]-[ferredoxin] + NADPH. This Bacillus subtilis (strain 168) protein is Ferredoxin--NADP reductase 1 (ycgT).